The sequence spans 413 residues: Protein arginine N-methyltransferase 2 (413 aa).

A disordered region spans residues 148 to 187 (LDGSDTEMGDKGGSARDVPASADSAPADSAGHSSSEPTAV). The segment covering 162–182 (ARDVPASADSAPADSAGHSSS) has biased composition (low complexity). An RMT2 domain is found at 192-413 (TAAHQDTYLQ…HYYHPEISFQ (222 aa)). Residues Y199, M229, 252–257 (FGMGII), 273–275 (EAH), 300–301 (WQ), and D321 each bind S-adenosyl-L-methionine.

This sequence belongs to the class I-like SAM-binding methyltransferase superfamily. RMT2 methyltransferase family. Monomer.

It localises to the cytoplasm. Its subcellular location is the nucleus. S-adenosyl-L-methionine-dependent protein-arginine N-methyltransferase that methylates the delta-nitrogen atom of arginine residues to form N5-methylarginine (type IV) in target proteins. Monomethylates ribosomal protein L12. This is Protein arginine N-methyltransferase 2 from Eremothecium gossypii (strain ATCC 10895 / CBS 109.51 / FGSC 9923 / NRRL Y-1056) (Yeast).